The chain runs to 68 residues: KCNQ1 downstream neighbor protein (68 aa).

Residues 28 to 68 (GVASGCSPSKASQEARGKEKCPTLNGQPQWSALFTLPPQRE) are disordered.

As to expression, shows reduced expression in Wilms' tumor samples.

The protein is KCNQ1 downstream neighbor protein (KCNQ1DN) of Homo sapiens (Human).